A 155-amino-acid polypeptide reads, in one-letter code: Ribosome maturation factor RimP (155 aa).

Belongs to the RimP family.

Its subcellular location is the cytoplasm. Its function is as follows. Required for maturation of 30S ribosomal subunits. This is Ribosome maturation factor RimP from Staphylococcus epidermidis (strain ATCC 35984 / DSM 28319 / BCRC 17069 / CCUG 31568 / BM 3577 / RP62A).